The primary structure comprises 307 residues: Ribosomal RNA small subunit methyltransferase H (307 aa).

S-adenosyl-L-methionine-binding positions include glycine 33–tyrosine 35, aspartate 51, phenylalanine 82, aspartate 96, and glutamine 103.

Belongs to the methyltransferase superfamily. RsmH family.

It is found in the cytoplasm. It carries out the reaction cytidine(1402) in 16S rRNA + S-adenosyl-L-methionine = N(4)-methylcytidine(1402) in 16S rRNA + S-adenosyl-L-homocysteine + H(+). Functionally, specifically methylates the N4 position of cytidine in position 1402 (C1402) of 16S rRNA. This Rickettsia africae (strain ESF-5) protein is Ribosomal RNA small subunit methyltransferase H.